Consider the following 448-residue polypeptide: Probable glycine dehydrogenase (decarboxylating) subunit 1 (448 aa).

Belongs to the GcvP family. N-terminal subunit subfamily. The glycine cleavage system is composed of four proteins: P, T, L and H. In this organism, the P 'protein' is a heterodimer of two subunits.

The enzyme catalyses N(6)-[(R)-lipoyl]-L-lysyl-[glycine-cleavage complex H protein] + glycine + H(+) = N(6)-[(R)-S(8)-aminomethyldihydrolipoyl]-L-lysyl-[glycine-cleavage complex H protein] + CO2. Its function is as follows. The glycine cleavage system catalyzes the degradation of glycine. The P protein binds the alpha-amino group of glycine through its pyridoxal phosphate cofactor; CO(2) is released and the remaining methylamine moiety is then transferred to the lipoamide cofactor of the H protein. The chain is Probable glycine dehydrogenase (decarboxylating) subunit 1 from Exiguobacterium sibiricum (strain DSM 17290 / CCUG 55495 / CIP 109462 / JCM 13490 / 255-15).